Here is a 614-residue protein sequence, read N- to C-terminus: 4-hydroxy-3-methylbut-2-en-1-yl diphosphate synthase (flavodoxin) (614 aa).

4 residues coordinate [4Fe-4S] cluster: Cys522, Cys525, Cys556, and Glu563.

Belongs to the IspG family. [4Fe-4S] cluster serves as cofactor.

The enzyme catalyses (2E)-4-hydroxy-3-methylbut-2-enyl diphosphate + oxidized [flavodoxin] + H2O + 2 H(+) = 2-C-methyl-D-erythritol 2,4-cyclic diphosphate + reduced [flavodoxin]. The protein operates within isoprenoid biosynthesis; isopentenyl diphosphate biosynthesis via DXP pathway; isopentenyl diphosphate from 1-deoxy-D-xylulose 5-phosphate: step 5/6. Functionally, converts 2C-methyl-D-erythritol 2,4-cyclodiphosphate (ME-2,4cPP) into 1-hydroxy-2-methyl-2-(E)-butenyl 4-diphosphate. This Phocaeicola vulgatus (strain ATCC 8482 / DSM 1447 / JCM 5826 / CCUG 4940 / NBRC 14291 / NCTC 11154) (Bacteroides vulgatus) protein is 4-hydroxy-3-methylbut-2-en-1-yl diphosphate synthase (flavodoxin).